The following is a 268-amino-acid chain: Satratoxin biosynthesis SC1 cluster protein 4 (268 aa).

4 helical membrane-spanning segments follow: residues Val-34–Phe-54, Leu-78–Ile-98, His-113–Val-133, and Ala-145–Tyr-165.

It belongs to the SAT4 family.

Its subcellular location is the membrane. The protein operates within mycotoxin biosynthesis. Functionally, part of the satratoxin SC1 cluster involved in the biosynthesis of satratoxins, trichothecene mycotoxins that are associated with human food poisonings. Satratoxins are suggested to be made by products of multiple gene clusters (SC1, SC2 and SC3) that encode 21 proteins in all, including polyketide synthases, acetyltransferases, and other enzymes expected to modify the trichothecene skeleton. SC1 encodes 10 proteins, SAT1 to SAT10. The largest are SAT8, which encodes a putative polyketide synthase (PKS) with a conventional non-reducing architecture, and SAT10, a putative protein containing four ankyrin repeats and thus may be involved in protein scaffolding. The putative short-chain reductase SAT3 may assist the PKS in some capacity. SAT6 contains a secretory lipase domain and acts probably as a trichothecene esterase. SAT5 encodes a putative acetyltransferase, and so, with SAT6, may affect endogenous protection from toxicity. The probable transcription factor SAT9 may regulate the expression of the SC1 cluster. SC2 encodes proteins SAT11 to SAT16, the largest of which encodes the putative reducing PKS SAT13. SAT11 is a cytochrome P450 monooxygenase, while SAT14 and SAT16 are probable acetyltransferases. The SC2 cluster may be regulated by the transcription factor SAT15. SC3 is a small cluster that encodes 5 proteins, SAT17 to SAT21. SAT21 is a putative MFS-type transporter which may have a role in exporting secondary metabolites. The four other proteins putatively encoded in SC3 include the taurine hydroxylase-like protein SAT17, the O-methyltransferase SAT18, the acetyltransferase SAT19, and the Cys6-type zinc finger SAT20, the latter being probably involved in regulation of SC3 expression. This is Satratoxin biosynthesis SC1 cluster protein 4 from Stachybotrys chartarum (strain CBS 109288 / IBT 7711) (Toxic black mold).